A 258-amino-acid chain; its full sequence is UPF0246 protein YaaA (258 aa).

Belongs to the UPF0246 family.

The polypeptide is UPF0246 protein YaaA (Escherichia coli O157:H7).